The following is a 206-amino-acid chain: Thymidylate kinase (206 aa).

Residue 10 to 17 (GIDGAGKS) coordinates ATP.

This sequence belongs to the thymidylate kinase family.

The catalysed reaction is dTMP + ATP = dTDP + ADP. Phosphorylation of dTMP to form dTDP in both de novo and salvage pathways of dTTP synthesis. This is Thymidylate kinase (tmk) from Neisseria meningitidis serogroup A / serotype 4A (strain DSM 15465 / Z2491).